A 202-amino-acid polypeptide reads, in one-letter code: Nucleoid occlusion factor SlmA (202 aa).

The HTH tetR-type domain maps to 14-75; the sequence is KERQQQVLEV…ALIERIEQTL (62 aa). Positions 38–57 form a DNA-binding region, H-T-H motif; that stretch reads TTERLAKAVGVSEGALYRYF.

This sequence belongs to the nucleoid occlusion factor SlmA family. Homodimer. Interacts with FtsZ.

It is found in the cytoplasm. The protein resides in the nucleoid. In terms of biological role, required for nucleoid occlusion (NO) phenomenon, which prevents Z-ring formation and cell division over the nucleoid. Acts as a DNA-associated cell division inhibitor that binds simultaneously chromosomal DNA and FtsZ, and disrupts the assembly of FtsZ polymers. SlmA-DNA-binding sequences (SBS) are dispersed on non-Ter regions of the chromosome, preventing FtsZ polymerization at these regions. This chain is Nucleoid occlusion factor SlmA, found in Actinobacillus pleuropneumoniae serotype 5b (strain L20).